The primary structure comprises 536 residues: Probable monofunctional riboflavin biosynthesis protein RIBA 3, chloroplastic (536 aa).

The N-terminal 43 residues, M1 to R43, are a transit peptide targeting the chloroplast. Positions C44 to K310 are inactive DHBP synthase. D-ribulose 5-phosphate is bound by residues G133 to D134, D138, and R248 to T252. Residues R311–N536 are GTP cyclohydrolase II. R361 to E365 contacts GTP. Residues C366, C377, and C379 each coordinate Zn(2+). Residues Q382, E405–R407, and T427 each bind GTP. D439 functions as the Proton acceptor; for GTP cyclohydrolase activity in the catalytic mechanism. The active-site Nucleophile; for GTP cyclohydrolase activity is the R441. The GTP site is built by T462 and K467. A disordered region spans residues Y507–N536. Positions I525–N536 are enriched in acidic residues.

It in the N-terminal section; belongs to the DHBP synthase family. The protein in the C-terminal section; belongs to the GTP cyclohydrolase II family. It depends on Zn(2+) as a cofactor.

The protein localises to the plastid. It is found in the chloroplast. It carries out the reaction GTP + 4 H2O = 2,5-diamino-6-hydroxy-4-(5-phosphoribosylamino)-pyrimidine + formate + 2 phosphate + 3 H(+). It functions in the pathway cofactor biosynthesis; riboflavin biosynthesis; 5-amino-6-(D-ribitylamino)uracil from GTP: step 1/4. In terms of biological role, involved in riboflavin biosynthesis. Catalyzes the conversion of GTP to 2,5-diamino-6-ribosylamino-4(3H)-pyrimidinone 5'-phosphate (DARP), formate and pyrophosphate. The protein is Probable monofunctional riboflavin biosynthesis protein RIBA 3, chloroplastic (RIBA3) of Oryza sativa subsp. japonica (Rice).